We begin with the raw amino-acid sequence, 337 residues long: o-succinylbenzoate synthase (337 aa).

Lys-142 (proton donor) is an active-site residue. Mg(2+) is bound by residues Asp-170, Glu-199, and Asp-222. Lys-248 acts as the Proton acceptor in catalysis.

The protein belongs to the mandelate racemase/muconate lactonizing enzyme family. MenC type 1 subfamily. The cofactor is a divalent metal cation.

It carries out the reaction (1R,6R)-6-hydroxy-2-succinyl-cyclohexa-2,4-diene-1-carboxylate = 2-succinylbenzoate + H2O. The protein operates within quinol/quinone metabolism; 1,4-dihydroxy-2-naphthoate biosynthesis; 1,4-dihydroxy-2-naphthoate from chorismate: step 4/7. Its pathway is quinol/quinone metabolism; menaquinone biosynthesis. Converts 2-succinyl-6-hydroxy-2,4-cyclohexadiene-1-carboxylate (SHCHC) to 2-succinylbenzoate (OSB). In Pasteurella multocida (strain Pm70), this protein is o-succinylbenzoate synthase.